The sequence spans 227 residues: Translation initiation factor 6 (227 aa).

This sequence belongs to the eIF-6 family.

In terms of biological role, binds to the 50S ribosomal subunit and prevents its association with the 30S ribosomal subunit to form the 70S initiation complex. In Pyrococcus horikoshii (strain ATCC 700860 / DSM 12428 / JCM 9974 / NBRC 100139 / OT-3), this protein is Translation initiation factor 6.